The chain runs to 258 residues: Phosphate import ATP-binding protein PstB 1 (258 aa).

Residues 5 to 247 (LDLTDVNIYY…EKIFSNPNQK (243 aa)) form the ABC transporter domain. 37–44 (GPSGCGKT) is an ATP binding site.

It belongs to the ABC transporter superfamily. Phosphate importer (TC 3.A.1.7) family. In terms of assembly, the complex is composed of two ATP-binding proteins (PstB), two transmembrane proteins (PstC and PstA) and a solute-binding protein (PstS).

The protein resides in the cell membrane. The enzyme catalyses phosphate(out) + ATP + H2O = ADP + 2 phosphate(in) + H(+). Functionally, part of the ABC transporter complex PstSACB involved in phosphate import. Responsible for energy coupling to the transport system. The protein is Phosphate import ATP-binding protein PstB 1 of Mycobacterium tuberculosis (strain CDC 1551 / Oshkosh).